A 131-amino-acid polypeptide reads, in one-letter code: Small ribosomal subunit protein uS8 (131 aa).

Belongs to the universal ribosomal protein uS8 family. In terms of assembly, part of the 30S ribosomal subunit. Contacts proteins S5 and S12.

Functionally, one of the primary rRNA binding proteins, it binds directly to 16S rRNA central domain where it helps coordinate assembly of the platform of the 30S subunit. In Sulfurovum sp. (strain NBC37-1), this protein is Small ribosomal subunit protein uS8.